Consider the following 182-residue polypeptide: Acireductone dioxygenase (182 aa).

Fe(2+) is bound by residues His-100, His-102, Glu-106, and His-145. Residues His-100, His-102, Glu-106, and His-145 each coordinate Ni(2+).

It belongs to the acireductone dioxygenase (ARD) family. Monomer. The cofactor is Fe(2+). Ni(2+) is required as a cofactor.

The enzyme catalyses 1,2-dihydroxy-5-(methylsulfanyl)pent-1-en-3-one + O2 = 3-(methylsulfanyl)propanoate + CO + formate + 2 H(+). The catalysed reaction is 1,2-dihydroxy-5-(methylsulfanyl)pent-1-en-3-one + O2 = 4-methylsulfanyl-2-oxobutanoate + formate + 2 H(+). It participates in amino-acid biosynthesis; L-methionine biosynthesis via salvage pathway; L-methionine from S-methyl-5-thio-alpha-D-ribose 1-phosphate: step 5/6. In terms of biological role, catalyzes 2 different reactions between oxygen and the acireductone 1,2-dihydroxy-3-keto-5-methylthiopentene (DHK-MTPene) depending upon the metal bound in the active site. Fe-containing acireductone dioxygenase (Fe-ARD) produces formate and 2-keto-4-methylthiobutyrate (KMTB), the alpha-ketoacid precursor of methionine in the methionine recycle pathway. Ni-containing acireductone dioxygenase (Ni-ARD) produces methylthiopropionate, carbon monoxide and formate, and does not lie on the methionine recycle pathway. The polypeptide is Acireductone dioxygenase (Nostoc sp. (strain PCC 7120 / SAG 25.82 / UTEX 2576)).